Reading from the N-terminus, the 115-residue chain is Nucleoid-associated protein Pro_0020 (115 aa).

It belongs to the YbaB/EbfC family. In terms of assembly, homodimer.

Its subcellular location is the cytoplasm. The protein localises to the nucleoid. Binds to DNA and alters its conformation. May be involved in regulation of gene expression, nucleoid organization and DNA protection. This chain is Nucleoid-associated protein Pro_0020, found in Prochlorococcus marinus (strain SARG / CCMP1375 / SS120).